The chain runs to 246 residues: uncharacterized protein (246 aa).

This sequence belongs to the BtpA family.

This is an uncharacterized protein from Archaeoglobus fulgidus (strain ATCC 49558 / DSM 4304 / JCM 9628 / NBRC 100126 / VC-16).